We begin with the raw amino-acid sequence, 710 residues long: MARKRKPPSSQGDPRRYDPDFQGPTAKRTCTDVLCCLIFLLFILGYVLLGLLAWAHGDPRKMAYPTDSQGHFCGQKGTPNENKTVLFYFNIFRCTSPSMMLRLQCSTTQICVSRCPERFLTYLDMQFLNKEDKNYWEYYRQFCKAKAKPVETLRDLLISGDCPLAVYPSRPFLQRCIPDLSALNGTWTPGSRMKFEDGSGQTRTMLEFREAANGISDLINARTIGLKLLEDYATSWKWILIGLTVAMALSWTFLILLRFTAGFLFWFFIFGVLGIIGYGIWYCFLEYSSIQQRPQSTFWMYGFGIQRRVNMFFHLKETWFSMMIILSAIEIIIIIVLIFLRTRIQVAIILLQEGSKAISYLPSALIYPVLTFILLSICISYWAVTAVFLATSGVPIFKVMVPAGQCIYEDETCDPEIFPYTNIPKDCPGASCNFAFYGGRSMYHNYILTFQVYNLFAFLWLINFVIALGQCALAGAFASYYWAMKKPDDIPPYPLFTAFGRAVRYHTGSLAFGSLILASVQMFKVIVEYLDRRLKKAQNSAAQFLHCCLQCCFWCLEKMVKFLNRNAYIMIALYGKNFCESTRDAFYLLMRNILKVTVTDEVTYFVLLLGKVLVSGIVGVLAFLLFTERLQIIVDGPTTLNYYWVPFLTLVFGSYMIAHGFFSVYSMCVETIFICFLEDLERNEGSPSRPYFVTPALMNILLEQGKIKKQ.

Residues 1-21 form a disordered region; sequence MARKRKPPSSQGDPRRYDPDF. The Cytoplasmic segment spans residues 1-32; the sequence is MARKRKPPSSQGDPRRYDPDFQGPTAKRTCTD. A helical transmembrane segment spans residues 33-53; sequence VLCCLIFLLFILGYVLLGLLA. The Extracellular portion of the chain corresponds to 54 to 236; it reads WAHGDPRKMA…KLLEDYATSW (183 aa). N-linked (GlcNAc...) asparagine glycosylation is found at N82 and N184. A helical membrane pass occupies residues 237–257; that stretch reads KWILIGLTVAMALSWTFLILL. At 258-260 the chain is on the cytoplasmic side; sequence RFT. A helical membrane pass occupies residues 261-281; sequence AGFLFWFFIFGVLGIIGYGIW. Residues 282–319 are Extracellular-facing; it reads YCFLEYSSIQQRPQSTFWMYGFGIQRRVNMFFHLKETW. A helical membrane pass occupies residues 320-340; it reads FSMMIILSAIEIIIIIVLIFL. Residues 341-345 lie on the Cytoplasmic side of the membrane; that stretch reads RTRIQ. Residues 346–366 traverse the membrane as a helical segment; that stretch reads VAIILLQEGSKAISYLPSALI. Over 367-368 the chain is Extracellular; that stretch reads YP. Residues 369 to 389 form a helical membrane-spanning segment; the sequence is VLTFILLSICISYWAVTAVFL. Residues 390 to 454 are Cytoplasmic-facing; sequence ATSGVPIFKV…NYILTFQVYN (65 aa). The chain crosses the membrane as a helical span at residues 455-475; that stretch reads LFAFLWLINFVIALGQCALAG. Residues 476–509 are Extracellular-facing; it reads AFASYYWAMKKPDDIPPYPLFTAFGRAVRYHTGS. The chain crosses the membrane as a helical span at residues 510–530; that stretch reads LAFGSLILASVQMFKVIVEYL. At 531–604 the chain is on the cytoplasmic side; sequence DRRLKKAQNS…KVTVTDEVTY (74 aa). A helical membrane pass occupies residues 605 to 625; the sequence is FVLLLGKVLVSGIVGVLAFLL. At 626-643 the chain is on the extracellular side; it reads FTERLQIIVDGPTTLNYY. Residues 644–664 traverse the membrane as a helical segment; sequence WVPFLTLVFGSYMIAHGFFSV. Residues 665–710 lie on the Cytoplasmic side of the membrane; sequence YSMCVETIFICFLEDLERNEGSPSRPYFVTPALMNILLEQGKIKKQ.

It belongs to the CTL (choline transporter-like) family.

The protein resides in the cell membrane. It carries out the reaction choline(out) + n H(+)(in) = choline(in) + n H(+)(out). Its function is as follows. Choline/H+ antiporter. The polypeptide is Choline transporter-like protein 5 (Slc44a5) (Mus musculus (Mouse)).